The sequence spans 217 residues: Ran-binding protein 1 homolog b (217 aa).

Disordered stretches follow at residues 1–32 (MASI…QVAP) and 160–217 (ESEE…VPSA). Ala-2 bears the N-acetylalanine mark. Residues 14–26 (DEEETGANEDEDT) show a composition bias toward acidic residues. The region spanning 29 to 164 (QVAPIVRLEE…FKEVAESEEE (136 aa)) is the RanBD1 domain. The segment covering 181 to 217 (LTVEEKESEKKPVEKAEENKKSEAVEEKKTEESVPSA) has biased composition (basic and acidic residues).

Interacts with the GTP-bound form of RAN1, RAN2 and RAN3.

It is found in the nucleus. The protein resides in the nuclear pore complex. In Arabidopsis thaliana (Mouse-ear cress), this protein is Ran-binding protein 1 homolog b (RANBP1B).